We begin with the raw amino-acid sequence, 61 residues long: Photosystem II reaction center X protein (61 aa).

The chain crosses the membrane as a helical span at residues 26–46 (IGSFIAAALLIVIPATAFLIF).

Belongs to the PsbX family. Type 2 subfamily. In terms of assembly, PSII consists of a core antenna complex that captures photons, and an electron transfer chain that converts photonic excitation into a charge separation. PSII forms dimeric complexes.

Its subcellular location is the cellular thylakoid membrane. Its function is as follows. Involved in the binding and/or turnover of quinones at the Q(B) site of Photosystem II. The polypeptide is Photosystem II reaction center X protein (Prochlorococcus marinus (strain MIT 9215)).